The chain runs to 239 residues: UPF0173 metal-dependent hydrolase DVU_3308 (239 aa).

It belongs to the UPF0173 family.

The polypeptide is UPF0173 metal-dependent hydrolase DVU_3308 (Nitratidesulfovibrio vulgaris (strain ATCC 29579 / DSM 644 / CCUG 34227 / NCIMB 8303 / VKM B-1760 / Hildenborough) (Desulfovibrio vulgaris)).